Reading from the N-terminus, the 242-residue chain is Cytochrome c oxidase subunit 2 (242 aa).

At 1–30 the chain is on the mitochondrial intermembrane side; it reads MSFYGSRYFGDIVHGELGKDLFRYHGFVMM. The helical transmembrane segment at 31 to 47 threads the bilayer; sequence VAVAVLVFVMYMGCVIL. The Mitochondrial matrix portion of the chain corresponds to 48 to 66; the sequence is FTKFSYRHFLNRQRLEFWW. Residues 67–83 traverse the membrane as a helical segment; that stretch reads TIVPMLMLVGLWXPSMI. The Mitochondrial intermembrane segment spans residues 84–242; the sequence is NLYYMEEVKR…YFVMWLEALN (159 aa). Cu cation contacts are provided by H176, C211, E213, C215, H219, and M222. E213 provides a ligand contact to Mg(2+).

It belongs to the cytochrome c oxidase subunit 2 family. In terms of assembly, component of the cytochrome c oxidase (complex IV, CIV), a multisubunit enzyme composed of a catalytic core of 3 subunits and several supernumerary subunits. The complex exists as a monomer or a dimer and forms supercomplexes (SCs) in the inner mitochondrial membrane with ubiquinol-cytochrome c oxidoreductase (cytochrome b-c1 complex, complex III, CIII). It depends on Cu cation as a cofactor.

It localises to the mitochondrion inner membrane. It catalyses the reaction 4 Fe(II)-[cytochrome c] + O2 + 8 H(+)(in) = 4 Fe(III)-[cytochrome c] + 2 H2O + 4 H(+)(out). Its function is as follows. Component of the cytochrome c oxidase, the last enzyme in the mitochondrial electron transport chain which drives oxidative phosphorylation. The respiratory chain contains 3 multisubunit complexes succinate dehydrogenase (complex II, CII), ubiquinol-cytochrome c oxidoreductase (cytochrome b-c1 complex, complex III, CIII) and cytochrome c oxidase (complex IV, CIV), that cooperate to transfer electrons derived from NADH and succinate to molecular oxygen, creating an electrochemical gradient over the inner membrane that drives transmembrane transport and the ATP synthase. Cytochrome c oxidase is the component of the respiratory chain that catalyzes the reduction of oxygen to water. Electrons originating from reduced cytochrome c in the intermembrane space (IMS) are transferred via the dinuclear copper A center (CU(A)) of subunit 2 and heme A of subunit 1 to the active site in subunit 1, a binuclear center (BNC) formed by heme A3 and copper B (CU(B)). The BNC reduces molecular oxygen to 2 water molecules using 4 electrons from cytochrome c in the IMS and 4 protons from the mitochondrial matrix. This is Cytochrome c oxidase subunit 2 (COII) from Mytilus edulis (Blue mussel).